The chain runs to 638 residues: Cell division control protein 45 homolog (638 aa).

Residues 151 to 204 (ELSDEENSDSSNEREEEVEDDNRSVESYSSSDYQARSRRRFSEETTQRRAEIKE) are disordered. Acidic residues predominate over residues 153-170 (SDEENSDSSNEREEEVED). The segment covering 190-204 (RFSEETTQRRAEIKE) has biased composition (basic and acidic residues).

This sequence belongs to the CDC45 family. As to quaternary structure, interacts with sld3.

The protein localises to the nucleus. In terms of biological role, required for initiation of chromosomal DNA replication. May have a role in regulating the MCM proteins nda1 and nda4. This is Cell division control protein 45 homolog (sna41) from Schizosaccharomyces pombe (strain 972 / ATCC 24843) (Fission yeast).